The primary structure comprises 26 residues: Nicotinic acetylcholine receptor-binding protein Mnn-1A (26 aa).

An intrachain disulfide couples Cys-3 to Cys-22.

The protein belongs to the three-finger toxin family. Short-chain subfamily. As to expression, expressed by the venom gland.

The protein resides in the secreted. In terms of biological role, binds and may inhibit nicotinic acetylcholine receptors (nAChR). The protein is Nicotinic acetylcholine receptor-binding protein Mnn-1A of Micrurus nigrocinctus (Central American coral snake).